Consider the following 338-residue polypeptide: DNA fragmentation factor subunit beta (338 aa).

Residues 4–80 enclose the CIDE-N domain; it reads KPKSVKLRAL…LLTLGQAWQG (77 aa).

As to quaternary structure, heterodimer of DFFA and DFFB. Interacts with H1-1.

The protein resides in the cytoplasm. The protein localises to the nucleus. Inhibited by DFFA (DFF45). Its function is as follows. Nuclease that induces DNA fragmentation and chromatin condensation during apoptosis. Degrades naked DNA and induces apoptotic morphology. The protein is DNA fragmentation factor subunit beta (DFFB) of Homo sapiens (Human).